A 229-amino-acid polypeptide reads, in one-letter code: 2,3-bisphosphoglycerate-dependent phosphoglycerate mutase (229 aa).

Substrate-binding positions include 8–15, 21–22, Arg-60, 87–90, Lys-98, 114–115, and 183–184; these read RHGESAWN, TG, ERHY, RR, and GN. Catalysis depends on His-9, which acts as the Tele-phosphohistidine intermediate. The active-site Proton donor/acceptor is Glu-87.

This sequence belongs to the phosphoglycerate mutase family. BPG-dependent PGAM subfamily. As to quaternary structure, homodimer.

The enzyme catalyses (2R)-2-phosphoglycerate = (2R)-3-phosphoglycerate. Its pathway is carbohydrate degradation; glycolysis; pyruvate from D-glyceraldehyde 3-phosphate: step 3/5. Its function is as follows. Catalyzes the interconversion of 2-phosphoglycerate and 3-phosphoglycerate. The polypeptide is 2,3-bisphosphoglycerate-dependent phosphoglycerate mutase (Polynucleobacter asymbioticus (strain DSM 18221 / CIP 109841 / QLW-P1DMWA-1) (Polynucleobacter necessarius subsp. asymbioticus)).